The sequence spans 44 residues: Photosystem I reaction center subunit IX (44 aa).

A helical membrane pass occupies residues Tyr7–Ile27.

The protein belongs to the PsaJ family.

It localises to the plastid. Its subcellular location is the chloroplast thylakoid membrane. In terms of biological role, may help in the organization of the PsaE and PsaF subunits. This chain is Photosystem I reaction center subunit IX, found in Dioscorea elephantipes (Elephant's foot yam).